The following is a 160-amino-acid chain: MPLYESVLIARNDVSQAQVETLVETIETLLKDNGGSIQKREFWGLRSLAYRIKKNRKGHYVLLGLDCTPDTLRELERQLGLNEDVLRVLTLRVDEIDENPSSVLARKSDDRGDRGNFRGGSKPAGRFESGRGGPRRSSEDREEYRARGEQDDARETAGAE.

Residues 100-160 form a disordered region; it reads PSSVLARKSD…DDARETAGAE (61 aa). Composition is skewed to basic and acidic residues over residues 106-116 and 136-160; these read RKSDDRGDRGN and RSSE…AGAE.

This sequence belongs to the bacterial ribosomal protein bS6 family.

Binds together with bS18 to 16S ribosomal RNA. The sequence is that of Small ribosomal subunit protein bS6 from Gluconobacter oxydans (strain 621H) (Gluconobacter suboxydans).